The primary structure comprises 630 residues: 1-deoxy-D-xylulose-5-phosphate synthase (630 aa).

Residues H74 and 115-117 (GHA) each bind thiamine diphosphate. Position 146 (D146) interacts with Mg(2+). Thiamine diphosphate is bound by residues 147–148 (AA), N175, F284, and E364. N175 is a Mg(2+) binding site.

This sequence belongs to the transketolase family. DXPS subfamily. As to quaternary structure, homodimer. Mg(2+) is required as a cofactor. The cofactor is thiamine diphosphate.

The enzyme catalyses D-glyceraldehyde 3-phosphate + pyruvate + H(+) = 1-deoxy-D-xylulose 5-phosphate + CO2. It participates in metabolic intermediate biosynthesis; 1-deoxy-D-xylulose 5-phosphate biosynthesis; 1-deoxy-D-xylulose 5-phosphate from D-glyceraldehyde 3-phosphate and pyruvate: step 1/1. Functionally, catalyzes the acyloin condensation reaction between C atoms 2 and 3 of pyruvate and glyceraldehyde 3-phosphate to yield 1-deoxy-D-xylulose-5-phosphate (DXP). The chain is 1-deoxy-D-xylulose-5-phosphate synthase from Methylacidiphilum infernorum (isolate V4) (Methylokorus infernorum (strain V4)).